The chain runs to 729 residues: DNA topoisomerase 3 (729 aa).

The Toprim domain maps to 3–136 (KSVVIAEKPS…IKRLWISSVT (134 aa)). Mg(2+) is bound by residues glutamate 9 and aspartate 105. A Topo IA-type catalytic domain is found at 153 to 594 (YDNLYASAVA…EMKNYTKEIV (442 aa)). Residues 187-192 (NCGRVQ) are interaction with DNA. Tyrosine 310 serves as the catalytic O-(5'-phospho-DNA)-tyrosine intermediate. The segment covering 686 to 713 (ERRKKESGNKADKRDVQKYMKQQKKEEE) has biased composition (basic and acidic residues). The tract at residues 686 to 718 (ERRKKESGNKADKRDVQKYMKQQKKEEEPLNNP) is disordered.

Belongs to the type IA topoisomerase family. It depends on Mg(2+) as a cofactor.

The enzyme catalyses ATP-independent breakage of single-stranded DNA, followed by passage and rejoining.. Functionally, releases the supercoiling and torsional tension of DNA, which is introduced during the DNA replication and transcription, by transiently cleaving and rejoining one strand of the DNA duplex. Introduces a single-strand break via transesterification at a target site in duplex DNA. The scissile phosphodiester is attacked by the catalytic tyrosine of the enzyme, resulting in the formation of a DNA-(5'-phosphotyrosyl)-enzyme intermediate and the expulsion of a 3'-OH DNA strand. The free DNA strand then undergoes passage around the unbroken strand, thus removing DNA supercoils. Finally, in the religation step, the DNA 3'-OH attacks the covalent intermediate to expel the active-site tyrosine and restore the DNA phosphodiester backbone. This Bacillus cereus (strain ATCC 10987 / NRS 248) protein is DNA topoisomerase 3.